We begin with the raw amino-acid sequence, 440 residues long: Protein CyaD (440 aa).

Residues 1-55 (MRRALRELAARHGRVLAASWRQRHRRPAGWFDPVETEFLPSALSLQERPISPTAR) lie on the Cytoplasmic side of the membrane. The chain crosses the membrane as a helical span at residues 56 to 75 (WLARILMALAAGALVWSVVG). Topologically, residues 76-440 (KTEIVVHAAG…RHAGESLGER (365 aa)) are periplasmic.

This sequence belongs to the membrane fusion protein (MFP) (TC 8.A.1) family.

Its subcellular location is the cell inner membrane. CyaD is necessary for transport of calmodulin-sensitive adenylate cyclase-hemolysin (cyclolysin). The polypeptide is Protein CyaD (cyaD) (Bordetella pertussis (strain ATCC 9797 / DSM 5571 / CCUG 30873 / LMG 14455 / NCTC 10739 / 18323)).